The primary structure comprises 655 residues: Putative sensor protein Sfri_3689 (655 aa).

Positions 1–17 are cleaved as a signal peptide; that stretch reads MKTLLLLLIIITMPVLA. The chain crosses the membrane as a helical span at residues 252–272; it reads FALAILVAIMSAIGMIFTGFI. The Histidine kinase domain maps to 419-653; the sequence is GIAHEINNPT…QIRLIFALAQ (235 aa). The residue at position 422 (His-422) is a Phosphohistidine; by autocatalysis.

The protein localises to the cell membrane. The catalysed reaction is ATP + protein L-histidine = ADP + protein N-phospho-L-histidine.. The sequence is that of Putative sensor protein Sfri_3689 from Shewanella frigidimarina (strain NCIMB 400).